Here is a 64-residue protein sequence, read N- to C-terminus: Large ribosomal subunit protein bL33 (64 aa).

It belongs to the bacterial ribosomal protein bL33 family.

In Rippkaea orientalis (strain PCC 8801 / RF-1) (Cyanothece sp. (strain PCC 8801)), this protein is Large ribosomal subunit protein bL33.